We begin with the raw amino-acid sequence, 157 residues long: Crossover junction endodeoxyribonuclease RuvC (157 aa).

Residues Asp7, Glu67, and Asp140 contribute to the active site. Positions 7, 67, and 140 each coordinate Mg(2+).

This sequence belongs to the RuvC family. As to quaternary structure, homodimer which binds Holliday junction (HJ) DNA. The HJ becomes 2-fold symmetrical on binding to RuvC with unstacked arms; it has a different conformation from HJ DNA in complex with RuvA. In the full resolvosome a probable DNA-RuvA(4)-RuvB(12)-RuvC(2) complex forms which resolves the HJ. Mg(2+) is required as a cofactor.

Its subcellular location is the cytoplasm. The catalysed reaction is Endonucleolytic cleavage at a junction such as a reciprocal single-stranded crossover between two homologous DNA duplexes (Holliday junction).. Functionally, the RuvA-RuvB-RuvC complex processes Holliday junction (HJ) DNA during genetic recombination and DNA repair. Endonuclease that resolves HJ intermediates. Cleaves cruciform DNA by making single-stranded nicks across the HJ at symmetrical positions within the homologous arms, yielding a 5'-phosphate and a 3'-hydroxyl group; requires a central core of homology in the junction. The consensus cleavage sequence is 5'-(A/T)TT(C/G)-3'. Cleavage occurs on the 3'-side of the TT dinucleotide at the point of strand exchange. HJ branch migration catalyzed by RuvA-RuvB allows RuvC to scan DNA until it finds its consensus sequence, where it cleaves and resolves the cruciform DNA. This is Crossover junction endodeoxyribonuclease RuvC from Rickettsia conorii (strain ATCC VR-613 / Malish 7).